We begin with the raw amino-acid sequence, 477 residues long: Bifunctional protein HldE (477 aa).

The interval 1–318 (MKVTLPEFER…ENAVRGRAET (318 aa)) is ribokinase. 195-198 (NLSE) is an ATP binding site. Residue D264 is part of the active site. The tract at residues 344–477 (MTNGVFDILH…IKKIQKDSDK (134 aa)) is cytidylyltransferase.

The protein in the N-terminal section; belongs to the carbohydrate kinase PfkB family. In the C-terminal section; belongs to the cytidylyltransferase family. As to quaternary structure, homodimer.

It catalyses the reaction D-glycero-beta-D-manno-heptose 7-phosphate + ATP = D-glycero-beta-D-manno-heptose 1,7-bisphosphate + ADP + H(+). It carries out the reaction D-glycero-beta-D-manno-heptose 1-phosphate + ATP + H(+) = ADP-D-glycero-beta-D-manno-heptose + diphosphate. It functions in the pathway nucleotide-sugar biosynthesis; ADP-L-glycero-beta-D-manno-heptose biosynthesis; ADP-L-glycero-beta-D-manno-heptose from D-glycero-beta-D-manno-heptose 7-phosphate: step 1/4. The protein operates within nucleotide-sugar biosynthesis; ADP-L-glycero-beta-D-manno-heptose biosynthesis; ADP-L-glycero-beta-D-manno-heptose from D-glycero-beta-D-manno-heptose 7-phosphate: step 3/4. Its function is as follows. Catalyzes the phosphorylation of D-glycero-D-manno-heptose 7-phosphate at the C-1 position to selectively form D-glycero-beta-D-manno-heptose-1,7-bisphosphate. In terms of biological role, catalyzes the ADP transfer from ATP to D-glycero-beta-D-manno-heptose 1-phosphate, yielding ADP-D-glycero-beta-D-manno-heptose. This is Bifunctional protein HldE from Klebsiella pneumoniae subsp. pneumoniae (strain ATCC 700721 / MGH 78578).